The chain runs to 496 residues: Transactivator/viroplasmin protein (496 aa).

The segment at 102–128 is disordered; sequence RPNQGIQIPKKNEDHSSSSSKEEKGIQ. Over residues 111 to 128 the composition is skewed to basic and acidic residues; that stretch reads KKNEDHSSSSSKEEKGIQ.

The protein belongs to the caulimoviridae viroplasmin family.

The protein resides in the host cytoplasm. Functionally, enhances the translation of downstream ORFs on polycistronic mRNAs derived from carnation etched ring virus. This Dianthus caryophyllus (Carnation) protein is Transactivator/viroplasmin protein.